Reading from the N-terminus, the 236-residue chain is Venom metalloproteinase antarease-like TfasMP_A (236 aa).

Residues 4 to 232 form the Peptidase M12B domain; the sequence is IVVEYYIVTD…KPAASCIFEQ (229 aa). His161 is a Zn(2+) binding site. Glu162 is an active-site residue. Positions 165 and 171 each coordinate Zn(2+).

The protein belongs to the venom metalloproteinase (M12B) family. Requires Zn(2+) as cofactor. Contains several disulfide bonds. As to expression, expressed by the venom gland.

It localises to the secreted. Its activity is regulated as follows. Inhibited by EDTA. In terms of biological role, acts as a metalloprotease. Penetrates intact tissue and specifically cleaves the vesicle-associated membrane protein 2 (VAMP2) (part of the SNARE complex) involved in pancreatic secretion, thus disrupting the normal vesicular traffic. The protein is Venom metalloproteinase antarease-like TfasMP_A of Tityus fasciolatus (Central Brazilian scorpion).